The chain runs to 1496 residues: Synaptojanin-2 (1496 aa).

One can recognise an SAC domain in the interval 120-444 (LKKILSSGVF…GHGLSKVFTG (325 aa)). The RRM domain occupies 906 to 985 (DATVIVNLQS…RAVKIRPKTK (80 aa)). 6 disordered regions span residues 1047–1083 (VVSD…HPTY), 1100–1149 (GNFR…GTHG), 1205–1357 (VPES…LQVL), 1393–1413 (SSAI…AASF), 1442–1461 (EPLD…SAQV), and 1468–1496 (RGLP…TLGV). The segment covering 1063 to 1074 (SASTPASKSPAL) has biased composition (low complexity). A compositionally biased stretch (pro residues) spans 1116-1130 (RPRPPHPPQRPPPPT). Serine 1139 is subject to Phosphoserine. Residues 1139–1149 (SDASISSGTHG) are compositionally biased toward polar residues. Pro residues-rich tracts occupy residues 1230–1239 (PVLPRRPVPR) and 1279–1292 (TPPP…PVPK). The span at 1324-1338 (ELSSPEAPEAPSLAP) shows a compositional bias: low complexity. Composition is skewed to basic and acidic residues over residues 1470-1480 (LPPDHGGKDFS) and 1487-1496 (NKDKRTTLGV).

Belongs to the synaptojanin family. The protein in the central section; belongs to the inositol 1,4,5-trisphosphate 5-phosphatase family. As to quaternary structure, binds to GRB2. Isoform 2A binds to SYNJ2BP/OMP25. As to expression, widely expressed. Isoforms 2B1 and 2B2 are concentrated at nerve terminals in brain and at spermatid manchette in testis.

It is found in the cytoplasm. It localises to the cell membrane. The protein resides in the presynapse. Its subcellular location is the cytoskeleton. The protein localises to the membrane raft. It is found in the mitochondrion. It catalyses the reaction a 1,2-diacyl-sn-glycero-3-phospho-(1D-myo-inositol-4,5-bisphosphate) + H2O = a 1,2-diacyl-sn-glycero-3-phospho-(1D-myo-inositol 4-phosphate) + phosphate. In terms of biological role, inositol 5-phosphatase which may be involved in distinct membrane trafficking and signal transduction pathways. May mediate the inhibitory effect of Rac1 on endocytosis. The chain is Synaptojanin-2 (Synj2) from Rattus norvegicus (Rat).